The following is a 319-amino-acid chain: uncharacterized protein (319 aa).

Positions 281–319 (KVERKQRRRDDQNIMRSKLPQQRQNPFCSTERPKRARCD) are disordered. The span at 299 to 308 (LPQQRQNPFC) shows a compositional bias: polar residues.

It is found in the cytoplasm. It localises to the nucleus. This is an uncharacterized protein from Saccharomyces cerevisiae (strain ATCC 204508 / S288c) (Baker's yeast).